The following is a 364-amino-acid chain: Protein PTOV1 homolog (364 aa).

Positions 187–207 are disordered; the sequence is AKRKPGVKTPKQPQPEEPPPV.

Belongs to the Mediator complex subunit 25 family. PTOV1 subfamily.

The polypeptide is Protein PTOV1 homolog (Drosophila melanogaster (Fruit fly)).